The chain runs to 370 residues: ECF RNA polymerase sigma factor SigG (370 aa).

The sigma-70 factor domain-2 stretch occupies residues 63-129 (EPYRRELLAH…LTALEGRRRR (67 aa)). A Polymerase core binding motif is present at residues 85–88 (DLVQ). The segment at 180-232 (LAFVAALQHLSPRQRAVLLLRDVLQWKSAEVADAIGTSTVAVNSLLQRARSQL) is sigma-70 factor domain-4. Residues 207 to 226 (SAEVADAIGTSTVAVNSLLQ) constitute a DNA-binding region (H-T-H motif).

This sequence belongs to the sigma-70 factor family. ECF subfamily. Interacts transiently with the RNA polymerase catalytic core formed by RpoA, RpoB, RpoC and RpoZ (2 alpha, 1 beta, 1 beta' and 1 omega subunit) to form the RNA polymerase holoenzyme that can initiate transcription.

In terms of biological role, sigma factors are initiation factors that promote the attachment of RNA polymerase to specific initiation sites and are then released. Extracytoplasmic function (ECF) sigma factors are held in an inactive form by a cognate anti-sigma factor until released, although no anti-sigma factor is known for this protein. May be involved in host intracellular survival after infection (strains H37Rv and CDC 1551). A role in the SOS response is controversial; it has been seen in strain CDC 1551 but not in H37Rv. The polypeptide is ECF RNA polymerase sigma factor SigG (sigG) (Mycobacterium tuberculosis (strain CDC 1551 / Oshkosh)).